We begin with the raw amino-acid sequence, 563 residues long: MIRFEDVSVTYDGATEPTVRAVDFEVPEGELVLLAGPSGVGKSTVLGAVGGLVPHFTGGTLRGRVTVAGRDTRTHKPRELADVVGTVGQDPLSHFVTDTVEDELAYGMESLGLPPDVMRRRVEETLDLLGLSDLRSRPIATLSGGQQQRVAIGSVLTPHPDVLVLDEPTSALDPAAAEEVLAVLQRLVHDLGTTVLMAEHRLERVIQYADQVVLLPAPGEAPLIGAPAEVMAVSPVYPPVVGLGRLAGWSPLPLTIRNARRRAAPLRERLAGREIPDHTPPPSAPLPAPPAPRPVTSRWRRRGKRPENPSAPTPYAAEVRSLAVRRDRVQALRHVDLTVSPGETVALMGRNGAGKSTLLSALVGLVEPSAGSVRAGDAVPHRTAPRDLVRRVGLVPQEPRDLLYADTVAAECAAADRDADAAPGTCRALLSELLPGITDDIHPRDLSEGQRLTLALSVVLTARPPLLLLDEPTRGLDYAAKARLAGILRGLAAEGHAIVLATHDVELAAELAHRVVLLAEGEVIADGPAADVVVASPSYAPQVAKVLAPRKWLTVAQVREALT.

One can recognise an ABC transporter 1 domain in the interval 2–243 (IRFEDVSVTY…SPVYPPVVGL (242 aa)). 36 to 43 (GPSGVGKS) is a binding site for ATP. The interval 271–317 (AGREIPDHTPPPSAPLPAPPAPRPVTSRWRRRGKRPENPSAPTPYAA) is disordered. Positions 278 to 293 (HTPPPSAPLPAPPAPR) are enriched in pro residues. The ABC transporter 2 domain occupies 317–545 (AEVRSLAVRR…SPSYAPQVAK (229 aa)). 349–356 (GRNGAGKS) contacts ATP.

The protein belongs to the ABC transporter superfamily.

The protein localises to the cell membrane. Its function is as follows. Probably part of an ABC transporter complex. Responsible for energy coupling to the transport system. This Streptomyces coelicolor (strain ATCC BAA-471 / A3(2) / M145) protein is Putative ABC transporter ATP-binding protein SCO2324.